Here is a 1483-residue protein sequence, read N- to C-terminus: Mediator of RNA polymerase II transcription subunit 26 (1483 aa).

The TFIIS N-terminal domain occupies 8-85 (ELTTHLSQAL…KKWREMVGIQ (78 aa)). 3 positions are modified to phosphoserine: Ser204, Ser258, and Ser421. Disordered regions lie at residues 227–278 (SDSD…GQVA), 414–438 (HEYLESDSPSQIPKRRGRKKGSKGV), 480–518 (VSMQSSASNLSNSSTNRDLPSHTTFPRQTSSCSDTSMNS), 541–575 (TDSDTVTSDPSHDSNKSQEIKECTSLDSNSNSIQS), and 989–1041 (DKSS…MKRR). Basic residues predominate over residues 426–435 (PKRRGRKKGS). The segment covering 480–495 (VSMQSSASNLSNSSTN) has biased composition (low complexity). Over residues 496-518 (RDLPSHTTFPRQTSSCSDTSMNS) the composition is skewed to polar residues. A Phosphothreonine modification is found at Thr541. A compositionally biased stretch (basic and acidic residues) spans 550–564 (PSHDSNKSQEIKECT). Ser551 is subject to Phosphoserine. Composition is skewed to polar residues over residues 565-575 (SLDSNSNSIQS) and 989-999 (DKSSNTGCQGN). A compositionally biased stretch (low complexity) spans 1000-1011 (SPYSSSSSSSYS). Residues 1020–1033 (ITKNLQNKNIQLNS) are compositionally biased toward polar residues. A Phosphoserine modification is found at Ser1177. Residue Thr1179 is modified to Phosphothreonine.

This sequence belongs to the Mediator complex subunit 26 family. In terms of assembly, component of the Mediator complex. Interacts with MED6 and MED17.

It is found in the nucleus. In terms of biological role, component of the Mediator complex, a coactivator involved in the regulated transcription of nearly all RNA polymerase II-dependent genes. Mediator functions as a bridge to convey information from gene-specific regulatory proteins to the basal RNA polymerase II transcription machinery. Mediator is recruited to promoters by direct interactions with regulatory proteins and serves as a scaffold for the assembly of a functional preinitiation complex with RNA polymerase II and the general transcription factors. Required for activated transcription of the MtnA gene. In Drosophila melanogaster (Fruit fly), this protein is Mediator of RNA polymerase II transcription subunit 26 (MED26).